The following is a 356-amino-acid chain: UDP-N-acetylglucosamine--N-acetylmuramyl-(pentapeptide) pyrophosphoryl-undecaprenol N-acetylglucosamine transferase (356 aa).

UDP-N-acetyl-alpha-D-glucosamine is bound by residues 12 to 14, Arg166, Ser196, and Gln291; that span reads TAG.

This sequence belongs to the glycosyltransferase 28 family. MurG subfamily.

Its subcellular location is the cell membrane. It carries out the reaction di-trans,octa-cis-undecaprenyl diphospho-N-acetyl-alpha-D-muramoyl-L-alanyl-D-glutamyl-meso-2,6-diaminopimeloyl-D-alanyl-D-alanine + UDP-N-acetyl-alpha-D-glucosamine = di-trans,octa-cis-undecaprenyl diphospho-[N-acetyl-alpha-D-glucosaminyl-(1-&gt;4)]-N-acetyl-alpha-D-muramoyl-L-alanyl-D-glutamyl-meso-2,6-diaminopimeloyl-D-alanyl-D-alanine + UDP + H(+). Its pathway is cell wall biogenesis; peptidoglycan biosynthesis. Cell wall formation. Catalyzes the transfer of a GlcNAc subunit on undecaprenyl-pyrophosphoryl-MurNAc-pentapeptide (lipid intermediate I) to form undecaprenyl-pyrophosphoryl-MurNAc-(pentapeptide)GlcNAc (lipid intermediate II). The protein is UDP-N-acetylglucosamine--N-acetylmuramyl-(pentapeptide) pyrophosphoryl-undecaprenol N-acetylglucosamine transferase of Geobacillus thermodenitrificans (strain NG80-2).